A 99-amino-acid chain; its full sequence is Integration host factor subunit alpha (99 aa).

It belongs to the bacterial histone-like protein family. As to quaternary structure, heterodimer of an alpha and a beta chain.

Its function is as follows. This protein is one of the two subunits of integration host factor, a specific DNA-binding protein that functions in genetic recombination as well as in transcriptional and translational control. The sequence is that of Integration host factor subunit alpha from Xylella fastidiosa (strain M12).